A 347-amino-acid chain; its full sequence is Protein RecA (347 aa).

Gly-66–Thr-73 serves as a coordination point for ATP.

It belongs to the RecA family.

It is found in the cytoplasm. Can catalyze the hydrolysis of ATP in the presence of single-stranded DNA, the ATP-dependent uptake of single-stranded DNA by duplex DNA, and the ATP-dependent hybridization of homologous single-stranded DNAs. It interacts with LexA causing its activation and leading to its autocatalytic cleavage. This is Protein RecA from Allochromatium vinosum (Chromatium vinosum).